A 181-amino-acid chain; its full sequence is Large ribosomal subunit protein bL17 (181 aa).

Residues 129–181 (AEKSEKSAKTAKAAKAPAKKATAKKASTKAVAAKKKAVKKAQKKDRAASAARA) form a disordered region. Basic residues predominate over residues 145 to 171 (PAKKATAKKASTKAVAAKKKAVKKAQK).

This sequence belongs to the bacterial ribosomal protein bL17 family. Part of the 50S ribosomal subunit. Contacts protein L32.

This Bdellovibrio bacteriovorus (strain ATCC 15356 / DSM 50701 / NCIMB 9529 / HD100) protein is Large ribosomal subunit protein bL17.